The primary structure comprises 108 residues: Class I hydrophobin 3 (108 aa).

An N-terminal signal peptide occupies residues 1–17 (MFFQTTIVAALAFLAVA). Cystine bridges form between C28-C87, C35-C81, C36-C69, and C88-C101. Residue N37 is glycosylated (N-linked (GlcNAc...) asparagine).

It belongs to the fungal hydrophobin family. As to quaternary structure, self-assembles to form functional amyloid fibrils called rodlets. Self-assembly into fibrillar rodlets occurs spontaneously at hydrophobic:hydrophilic interfaces and the rodlets further associate laterally to form amphipathic monolayers.

The protein resides in the secreted. The protein localises to the cell wall. In terms of biological role, aerial growth, conidiation, and dispersal of filamentous fungi in the environment rely upon a capability of their secreting small amphipathic proteins called hydrophobins (HPBs) with low sequence identity. Class I can self-assemble into an outermost layer of rodlet bundles on aerial cell surfaces, conferring cellular hydrophobicity that supports fungal growth, development and dispersal; whereas Class II form highly ordered films at water-air interfaces through intermolecular interactions but contribute nothing to the rodlet structure. Vmh3 is a class I hydrophobin that is essential for the maintenance of the surface hydrophobicity of the mycelium and might be involved in the development of fruiting bodies. Plays an important role in hyphal resistance against environmental stress. Necessary for the efficient biodegradation of lignin. The polypeptide is Class I hydrophobin 3 (Pleurotus ostreatus (Oyster mushroom)).